The chain runs to 393 residues: Formate-dependent phosphoribosylglycinamide formyltransferase (393 aa).

Residues 22–23 (EL) and Glu82 contribute to the N(1)-(5-phospho-beta-D-ribosyl)glycinamide site. Residues Arg114, Lys155, 160–165 (SSGKGQ), 195–198 (EGFI), and Glu203 each bind ATP. Residues 119-308 (RLAAEELDLP…QFALHARAIL (190 aa)) enclose the ATP-grasp domain. 2 residues coordinate Mg(2+): Glu267 and Glu279. Residues Asp286, Lys356, and 363 to 364 (RR) contribute to the N(1)-(5-phospho-beta-D-ribosyl)glycinamide site.

It belongs to the PurK/PurT family. In terms of assembly, homodimer.

The catalysed reaction is N(1)-(5-phospho-beta-D-ribosyl)glycinamide + formate + ATP = N(2)-formyl-N(1)-(5-phospho-beta-D-ribosyl)glycinamide + ADP + phosphate + H(+). It functions in the pathway purine metabolism; IMP biosynthesis via de novo pathway; N(2)-formyl-N(1)-(5-phospho-D-ribosyl)glycinamide from N(1)-(5-phospho-D-ribosyl)glycinamide (formate route): step 1/1. Functionally, involved in the de novo purine biosynthesis. Catalyzes the transfer of formate to 5-phospho-ribosyl-glycinamide (GAR), producing 5-phospho-ribosyl-N-formylglycinamide (FGAR). Formate is provided by PurU via hydrolysis of 10-formyl-tetrahydrofolate. The sequence is that of Formate-dependent phosphoribosylglycinamide formyltransferase from Pseudomonas fluorescens (strain ATCC BAA-477 / NRRL B-23932 / Pf-5).